Reading from the N-terminus, the 562-residue chain is Dihydroxy-acid dehydratase (562 aa).

Residue D80 participates in Mg(2+) binding. C121 serves as a coordination point for [2Fe-2S] cluster. Residues D122 and K123 each coordinate Mg(2+). K123 carries the N6-carboxylysine modification. [2Fe-2S] cluster is bound at residue C194. E446 is a binding site for Mg(2+). Catalysis depends on S472, which acts as the Proton acceptor.

Belongs to the IlvD/Edd family. Homodimer. Requires [2Fe-2S] cluster as cofactor. The cofactor is Mg(2+).

It catalyses the reaction (2R)-2,3-dihydroxy-3-methylbutanoate = 3-methyl-2-oxobutanoate + H2O. The catalysed reaction is (2R,3R)-2,3-dihydroxy-3-methylpentanoate = (S)-3-methyl-2-oxopentanoate + H2O. Its pathway is amino-acid biosynthesis; L-isoleucine biosynthesis; L-isoleucine from 2-oxobutanoate: step 3/4. The protein operates within amino-acid biosynthesis; L-valine biosynthesis; L-valine from pyruvate: step 3/4. Functionally, functions in the biosynthesis of branched-chain amino acids. Catalyzes the dehydration of (2R,3R)-2,3-dihydroxy-3-methylpentanoate (2,3-dihydroxy-3-methylvalerate) into 2-oxo-3-methylpentanoate (2-oxo-3-methylvalerate) and of (2R)-2,3-dihydroxy-3-methylbutanoate (2,3-dihydroxyisovalerate) into 2-oxo-3-methylbutanoate (2-oxoisovalerate), the penultimate precursor to L-isoleucine and L-valine, respectively. In Macrococcus caseolyticus (strain JCSC5402) (Macrococcoides caseolyticum), this protein is Dihydroxy-acid dehydratase.